A 329-amino-acid polypeptide reads, in one-letter code: Malate dehydrogenase (329 aa).

An NAD(+)-binding site is contributed by 12–18 (GAAGQIG). Substrate contacts are provided by R95 and R101. NAD(+) is bound by residues N108, Q115, and 132-134 (VGN). Residues N134 and R165 each coordinate substrate. The active-site Proton acceptor is H190.

This sequence belongs to the LDH/MDH superfamily. MDH type 2 family.

It carries out the reaction (S)-malate + NAD(+) = oxaloacetate + NADH + H(+). Functionally, catalyzes the reversible oxidation of malate to oxaloacetate. The sequence is that of Malate dehydrogenase from Ralstonia nicotianae (strain ATCC BAA-1114 / GMI1000) (Ralstonia solanacearum).